We begin with the raw amino-acid sequence, 305 residues long: N-acetylneuraminate lyase 2 (305 aa).

Aceneuramate-binding residues include serine 47 and threonine 48. Tyrosine 137 acts as the Proton donor in catalysis. Catalysis depends on lysine 165, which acts as the Schiff-base intermediate with substrate. Threonine 167, glycine 189, aspartate 191, glutamate 192, and serine 208 together coordinate aceneuramate.

The protein belongs to the DapA family. NanA subfamily. Homotetramer.

The protein localises to the cytoplasm. The enzyme catalyses aceneuramate = aldehydo-N-acetyl-D-mannosamine + pyruvate. It functions in the pathway amino-sugar metabolism; N-acetylneuraminate degradation; D-fructose 6-phosphate from N-acetylneuraminate: step 1/5. Functionally, catalyzes the reversible aldol cleavage of N-acetylneuraminic acid (sialic acid; Neu5Ac) to form pyruvate and N-acetylmannosamine (ManNAc) via a Schiff base intermediate. This is N-acetylneuraminate lyase 2 from Escherichia coli O6:H1 (strain CFT073 / ATCC 700928 / UPEC).